Consider the following 165-residue polypeptide: V-type proton ATPase 16 kDa proteolipid subunit (165 aa).

Residues 1 to 10 (MSSTFSGDET) lie on the Lumenal side of the membrane. Residues 11-33 (APFFGFLGAAAALVFSCMGAAYG) traverse the membrane as a helical segment. Over 34–55 (TAKSGVGVASMGVMRPELVMKS) the chain is Cytoplasmic. Residues 56-76 (IVPVVMAGVLGIYGLIIAVII) form a helical membrane-spanning segment. Topologically, residues 77–95 (STGINPKAKSYYLFDGYAH) are lumenal. The helical transmembrane segment at 96–117 (LSSGLACGLAGLSAGMAIGIVG) threads the bilayer. At 118 to 129 (DAGVRANAQQPK) the chain is on the cytoplasmic side. A helical membrane pass occupies residues 130–155 (LFVGMILILIFAEALALYGLIVGIIL). The Lumenal segment spans residues 156 to 165 (SSRAGQSRAD).

It belongs to the V-ATPase proteolipid subunit family. As to quaternary structure, V-ATPase is a heteromultimeric enzyme composed of a peripheral catalytic V1 complex (main components: subunits A, B, C, D, E, and F) attached to an integral membrane V0 proton pore complex (main component: the proteolipid protein; which is present as a hexamer that forms the proton-conducting pore). In terms of tissue distribution, higher expression in leaves, followed by roots and weakly in flowers. Expression in leaves is light-dependent.

Its subcellular location is the vacuole membrane. Functionally, proton-conducting pore forming subunit of the membrane integral V0 complex of vacuolar ATPase. V-ATPase is responsible for acidifying a variety of intracellular compartments in eukaryotic cells. Necessary for the crassulacean acid metabolism. The polypeptide is V-type proton ATPase 16 kDa proteolipid subunit (Kalanchoe daigremontiana (Devil's backbone)).